The following is a 1193-amino-acid chain: Laminin subunit gamma-2 (1193 aa).

An N-terminal signal peptide occupies residues 1 to 21 (MPALWLGCCLCFSLLLPAARA). Cystine bridges form between C28-C37, C30-C53, C56-C65, C68-C81, C84-C96, C86-C102, C104-C113, C116-C128, C139-C150, C141-C155, C157-C166, and C169-C184. Laminin EGF-like domains follow at residues 28 to 83 (CDCN…RCLP), 84 to 130 (CNCN…GCTQ), and 139 to 186 (CDCD…GCTQ). Residues 187–196 (CFCYGHSASC) enclose the Laminin EGF-like 4; first part domain. In terms of domain architecture, Laminin IV type A spans 213 to 381 (QDVDGWKAVQ…SGAPAPWVEQ (169 aa)). N-linked (GlcNAc...) asparagine glycans are attached at residues N342 and N362. A Laminin EGF-like 4; second part domain is found at 382–415 (CICPVGYKGQFCQDCASGYKRDSARLGPFGTCIP). Laminin EGF-like domains are found at residues 416 to 461 (CNCQ…SCKP), 462 to 516 (CPCH…PCQP), and 517 to 572 (CQCN…KCRA). 11 disulfide bridges follow: C462-C470, C464-C481, C484-C493, C496-C514, C517-C531, C519-C538, C541-C550, C553-C570, C573-C585, C575-C591, and C593-C602. The region spanning 573 to 602 (CNCNPMGSEPVGCRSDGTCVCKPGFGGPNC) is the Laminin EGF-like 8; truncated domain. A domain II and I region spans residues 603-1193 (EHGAFSCPAC…CYNTQALEQQ (591 aa)). The stretch at 611–718 (ACYNQVKIQM…GSQYQNRVRD (108 aa)) forms a coiled coil. S803 and S805 each carry an O-linked (Xyl...) (chondroitin sulfate) serine glycan. Coiled-coil stretches lie at residues 811–1076 (AVVQ…AVQM) and 1117–1193 (EEGL…LEQQ). N-linked (GlcNAc...) asparagine glycans are attached at residues N942 and N1033.

Laminin is a complex glycoprotein, consisting of three different polypeptide chains (alpha, beta, gamma), which are bound to each other by disulfide bonds into a cross-shaped molecule comprising one long and three short arms with globules at each end. Gamma-2 is a subunit of laminin-5 (laminin-332 or epiligrin/kalinin/nicein). In terms of processing, O-glycosylated; contains chondroitin sulfate (CS). CS attachment is on either Ser-803 or Ser-805. As to expression, the large variant is expressed only in specific epithelial cells of embryonic and neonatal tissues. In 17-week old embryo the small variant is found in cerebral cortex, lung, and distal tubes of kidney, but not in epithelia except for distal tubuli.

Its subcellular location is the secreted. It localises to the extracellular space. The protein localises to the extracellular matrix. The protein resides in the basement membrane. Functionally, binding to cells via a high affinity receptor, laminin is thought to mediate the attachment, migration and organization of cells into tissues during embryonic development by interacting with other extracellular matrix components. Ladsin exerts cell-scattering activity toward a wide variety of cells, including epithelial, endothelial, and fibroblastic cells. The polypeptide is Laminin subunit gamma-2 (LAMC2) (Homo sapiens (Human)).